The sequence spans 282 residues: HTH-type transcriptional activator RhaR (282 aa).

One can recognise an HTH araC/xylS-type domain in the interval 179 to 277 (DKLITALANS…GMTPSQWRHL (99 aa)). 2 DNA-binding regions (H-T-H motif) span residues 196 to 217 (DAFC…RAQT) and 244 to 267 (ISEI…TRET).

Binds DNA as a dimer.

It localises to the cytoplasm. In terms of biological role, activates expression of the rhaSR operon in response to L-rhamnose. This Salmonella agona (strain SL483) protein is HTH-type transcriptional activator RhaR.